Reading from the N-terminus, the 466-residue chain is Rho GTPase-activating protein 1 (466 aa).

2 disordered regions span residues 1–31 (MTEV…SLSY) and 65–84 (EEQD…DDGG). Positions 8–31 (PSSPSASHSSSSSSSSPSPSSLSY) are enriched in low complexity. Positions 65 to 74 (EEQDLRRRSS) are enriched in basic and acidic residues. The 14-residue stretch at 117–130 (IGWPTNVRHVAHVT) folds into the CRIB domain. The Rho-GAP domain occupies 162 to 342 (VSTESMQLSY…TLIEKTLRER (181 aa)). The segment at 354-402 (PLEPSDESGHQSPSQSLAFNTSEQSEETQSDNIENAENQSSSSEISDEL) is disordered. Composition is skewed to polar residues over residues 363-376 (HQSP…NTSE) and 383-397 (SDNI…SSSE).

Acts as a GTPase activator for the Rac-type GTPase by converting it to an inactive GDP-bound state. In Arabidopsis thaliana (Mouse-ear cress), this protein is Rho GTPase-activating protein 1 (ROPGAP1).